Reading from the N-terminus, the 382-residue chain is Chaperone protein DnaJ (382 aa).

Residues 5–70 (DYYDLLGLSK…DKRAAYDRYG (66 aa)) enclose the J domain. The segment at 138-216 (GTKVPINYVT…CSGSGRVRDE (79 aa)) adopts a CR-type zinc-finger fold. Residues C151, C154, C168, C171, C190, C193, C204, and C207 each coordinate Zn(2+). CXXCXGXG motif repeat units follow at residues 151-158 (CSSCSGSG), 168-175 (CNTCHGAG), 190-197 (CHVCNGEG), and 204-211 (CKKCSGSG).

Belongs to the DnaJ family. In terms of assembly, homodimer. It depends on Zn(2+) as a cofactor.

It localises to the cytoplasm. Participates actively in the response to hyperosmotic and heat shock by preventing the aggregation of stress-denatured proteins and by disaggregating proteins, also in an autonomous, DnaK-independent fashion. Unfolded proteins bind initially to DnaJ; upon interaction with the DnaJ-bound protein, DnaK hydrolyzes its bound ATP, resulting in the formation of a stable complex. GrpE releases ADP from DnaK; ATP binding to DnaK triggers the release of the substrate protein, thus completing the reaction cycle. Several rounds of ATP-dependent interactions between DnaJ, DnaK and GrpE are required for fully efficient folding. Also involved, together with DnaK and GrpE, in the DNA replication of plasmids through activation of initiation proteins. This Ehrlichia ruminantium (strain Welgevonden) protein is Chaperone protein DnaJ.